A 158-amino-acid chain; its full sequence is Frataxin homolog, mitochondrial (158 aa).

It belongs to the frataxin family. In terms of assembly, monomer. Oligomer.

It localises to the mitochondrion. It carries out the reaction 4 Fe(2+) + O2 + 4 H(+) = 4 Fe(3+) + 2 H2O. In terms of biological role, promotes the biosynthesis of heme as well as the assembly and repair of iron-sulfur clusters by delivering Fe(2+) to proteins involved in these pathways. May play a role in the protection against iron-catalyzed oxidative stress through its ability to catalyze the oxidation of Fe(2+) to Fe(3+). May be able to store large amounts of the metal in the form of a ferrihydrite mineral by oligomerization. In Schizosaccharomyces pombe (strain 972 / ATCC 24843) (Fission yeast), this protein is Frataxin homolog, mitochondrial.